The primary structure comprises 152 residues: Transcriptional repressor NrdR (152 aa).

The span at 1-10 shows a compositional bias: polar residues; it reads MKCPSCQHNG. The interval 1–21 is disordered; the sequence is MKCPSCQHNGSRVLDSRPADE. Residues 3 to 34 fold into a zinc finger; the sequence is CPSCQHNGSRVLDSRPADEGKSIRRRRECEAC. Residues 49 to 139 form the ATP-cone domain; it reads LIVVKKEGVR…VYRQFKDINV (91 aa).

This sequence belongs to the NrdR family. Zn(2+) serves as cofactor.

In terms of biological role, negatively regulates transcription of bacterial ribonucleotide reductase nrd genes and operons by binding to NrdR-boxes. The chain is Transcriptional repressor NrdR from Bacillus velezensis (strain DSM 23117 / BGSC 10A6 / LMG 26770 / FZB42) (Bacillus amyloliquefaciens subsp. plantarum).